The sequence spans 1056 residues: Kinesin-like protein KIN-5A (1056 aa).

The segment at 1-44 (MDRRIGLTSPSPKSTEKSGRDLRSGGDANGGANTNSNSIPRGDK) is disordered. Positions 14–24 (STEKSGRDLRS) are enriched in basic and acidic residues. Residues 49–395 (NVQVILRCRP…LDYAHRAKNI (347 aa)) form the Kinesin motor domain. Residue 135 to 142 (GQTGTGKT) coordinates ATP. Positions 443–525 (QEEAEKKAMT…STIKEKEYVI (83 aa)) form a coiled coil.

It belongs to the TRAFAC class myosin-kinesin ATPase superfamily. Kinesin family. KIN-5/BimC subfamily.

The protein resides in the cytoplasm. It localises to the cytoskeleton. Its subcellular location is the spindle. Responsible for microtubule translocation. May be important for the organization of phragmoplast-specific arrays of microtubules. Plays an essential role in stabilizing the mitotic spindle. Required during mitotic cytokinesis. The protein is Kinesin-like protein KIN-5A of Oryza sativa subsp. japonica (Rice).